Reading from the N-terminus, the 356-residue chain is UDP-N-acetylglucosamine--N-acetylmuramyl-(pentapeptide) pyrophosphoryl-undecaprenol N-acetylglucosamine transferase (356 aa).

Positions 198 and 289 each coordinate UDP-N-acetyl-alpha-D-glucosamine.

It belongs to the glycosyltransferase 28 family. MurG subfamily.

It localises to the cell membrane. It carries out the reaction Mur2Ac(oyl-L-Ala-gamma-D-Glu-L-Lys-D-Ala-D-Ala)-di-trans,octa-cis-undecaprenyl diphosphate + UDP-N-acetyl-alpha-D-glucosamine = beta-D-GlcNAc-(1-&gt;4)-Mur2Ac(oyl-L-Ala-gamma-D-Glu-L-Lys-D-Ala-D-Ala)-di-trans,octa-cis-undecaprenyl diphosphate + UDP + H(+). Its pathway is cell wall biogenesis; peptidoglycan biosynthesis. In terms of biological role, cell wall formation. Catalyzes the transfer of a GlcNAc subunit on undecaprenyl-pyrophosphoryl-MurNAc-pentapeptide (lipid intermediate I) to form undecaprenyl-pyrophosphoryl-MurNAc-(pentapeptide)GlcNAc (lipid intermediate II). This Streptococcus thermophilus (strain CNRZ 1066) protein is UDP-N-acetylglucosamine--N-acetylmuramyl-(pentapeptide) pyrophosphoryl-undecaprenol N-acetylglucosamine transferase.